The primary structure comprises 843 residues: MPLSYPHFRKLLLLDDEAGPLEEELPRLADEGLNRRVAEDLNLQLPNVSIPWTHKVGNFTGLYSSTVPAFNPNWLTPSFPDIHLHQDMISKCEQFVGPLTKNELRRLKLVMPARFYPKHTKYFLLEKGIKPYYPDQAVNHYFQTRHYLHTLWKAGILYKRETTRSASFCGSQYSWEQELQHGSTSLNDKKGHGTESFCAQSTGLLARPSAGSAIQSKFQQSRLGLQHKQGQLANGKQGRSGRLRSRVHTPTRWPAGVEPSGTGCFNNLASRSASCFHQSAVREEANPSLSTSKRHTSSGHAVELNSLPPSSVGSQGKGTVFSCWWLQFRNTEPCSDYCLSHIINLLEDWGPCYEHGEHHIRTPRTPARVTGGVFLVDKNPHNTTESRLVVDFSQFSRGTTQVSWPKFAVPNLQSLTNLLSSNLSWLSLDVSAAFYHLPLHPAAMPHLLVGSSGLPRYVARLSSTSRIHDHQHGTMQNLHSSCSRNLYVSLLLLFQTLGRKLHLYSHPIILGFRKIPMGVGLSPFLLAQFTSAICSVVRRAFPHCLAFSYMDDLVLGAKSVQHLESLYTAVTNFLLSVGIHLNTAKTKRWGYNLHFMGYVIGSWGTLPQDHIVHKIKDCFRKVPVNRPIDWKVCQSIVGLLGFAAPFTQCGYPALMPLYACITAKQAFVFSPTYKAFLCKQYMNLYPVARQRPGLCQVFADATPTGWGLAIGHQRMRGTFVAPLPIHTAELLAACFARSRSGAILIGTDNSVVLSRKYTSFPWLLGCAANWILRGTSFVYVPSALNPADEPSRGRLGLYRPLLRLPFQPTTGRTSLYADSPSVPSHLPDRVHFASPLHVAWRPP.

Positions 1–177 (MPLSYPHFRK…FCGSQYSWEQ (177 aa)) are terminal protein domain (TP). A spacer region spans residues 178–346 (ELQHGSTSLN…YCLSHIINLL (169 aa)). 2 disordered regions span residues 228-255 (KQGQ…RWPA) and 284-314 (EANP…SVGS). The segment covering 239–249 (RSGRLRSRVHT) has biased composition (basic residues). Positions 347 to 690 (EDWGPCYEHG…YMNLYPVARQ (344 aa)) are polymerase/reverse transcriptase domain (RT). A Reverse transcriptase domain is found at 357-600 (EHHIRTPRTP…YNLHFMGYVI (244 aa)). Asp-429, Asp-551, and Asp-552 together coordinate Mg(2+).

This sequence belongs to the hepadnaviridae P protein family.

It catalyses the reaction DNA(n) + a 2'-deoxyribonucleoside 5'-triphosphate = DNA(n+1) + diphosphate. The enzyme catalyses Endonucleolytic cleavage to 5'-phosphomonoester.. Its activity is regulated as follows. Activated by host HSP70 and HSP40 in vitro to be able to bind the epsilon loop of the pgRNA. Because deletion of the RNase H region renders the protein partly chaperone-independent, the chaperones may be needed indirectly to relieve occlusion of the RNA-binding site by this domain. Inhibited by several reverse-transcriptase inhibitors: Lamivudine, Adefovir and Entecavir. Functionally, multifunctional enzyme that converts the viral RNA genome into dsDNA in viral cytoplasmic capsids. This enzyme displays a DNA polymerase activity that can copy either DNA or RNA templates, and a ribonuclease H (RNase H) activity that cleaves the RNA strand of RNA-DNA heteroduplexes in a partially processive 3'- to 5'-endonucleasic mode. Neo-synthesized pregenomic RNA (pgRNA) are encapsidated together with the P protein, and reverse-transcribed inside the nucleocapsid. Initiation of reverse-transcription occurs first by binding the epsilon loop on the pgRNA genome, and is initiated by protein priming, thereby the 5'-end of (-)DNA is covalently linked to P protein. Partial (+)DNA is synthesized from the (-)DNA template and generates the relaxed circular DNA (RC-DNA) genome. After budding and infection, the RC-DNA migrates in the nucleus, and is converted into a plasmid-like covalently closed circular DNA (cccDNA). The activity of P protein does not seem to be necessary for cccDNA generation, and is presumably released from (+)DNA by host nuclear DNA repair machinery. In Hepatitis B virus genotype F2 subtype adw4q (isolate Senegal/9203) (HBV-F), this protein is Protein P.